Reading from the N-terminus, the 365-residue chain is uncharacterized protein (365 aa).

Residue 31 to 38 (GPINSGKT) coordinates ATP.

This sequence belongs to the archaeal ATPase family.

This is an uncharacterized protein from Methanocaldococcus jannaschii (strain ATCC 43067 / DSM 2661 / JAL-1 / JCM 10045 / NBRC 100440) (Methanococcus jannaschii).